The sequence spans 203 residues: Large ribosomal subunit protein uL13 (203 aa).

Residue A2 is modified to N-acetylalanine. R59 is modified (citrulline). A Phosphoserine; by ZIPK/DAPK3 modification is found at S77. A Citrulline modification is found at R140. N6-acetyllysine is present on K191.

Belongs to the universal ribosomal protein uL13 family. As to quaternary structure, component of the 60S ribosome. Component of the GAIT complex. Interacts with EIF4G1. In terms of processing, phosphorylation at Ser-77 upon interferon-gamma treatment in macrophages involves a DAPK1-DAPK3 kinase cascade and is causing release from the ribosome, association with the GAIT complex and subsequent involvement in transcript-selective translation inhibition. Post-translationally, citrullinated by PADI4.

It is found in the cytoplasm. Associated with ribosomes but is not required for canonical ribosome function and has extra-ribosomal functions. Component of the GAIT (gamma interferon-activated inhibitor of translation) complex which mediates interferon-gamma-induced transcript-selective translation inhibition in inflammation processes. Upon interferon-gamma activation and subsequent phosphorylation dissociates from the ribosome and assembles into the GAIT complex which binds to stem loop-containing GAIT elements in the 3'-UTR of diverse inflammatory mRNAs (such as ceruplasmin) and suppresses their translation. In the GAIT complex interacts with m7G cap-bound eIF4G at or near the eIF3-binding site and blocks the recruitment of the 43S ribosomal complex. Involved in methylation of rRNA. The chain is Large ribosomal subunit protein uL13 (Rpl13a) from Mus musculus (Mouse).